The chain runs to 99 residues: Nucleoid-associated protein SUB1611 (99 aa).

It belongs to the YbaB/EbfC family. As to quaternary structure, homodimer.

Its subcellular location is the cytoplasm. The protein resides in the nucleoid. Functionally, binds to DNA and alters its conformation. May be involved in regulation of gene expression, nucleoid organization and DNA protection. The sequence is that of Nucleoid-associated protein SUB1611 from Streptococcus uberis (strain ATCC BAA-854 / 0140J).